We begin with the raw amino-acid sequence, 197 residues long: Probable 26S proteasome non-ATPase regulatory subunit 9 (197 aa).

In terms of domain architecture, PDZ spans Lys75–Glu166.

The protein belongs to the proteasome subunit p27 family.

In terms of biological role, acts as a chaperone during the assembly of the 26S proteasome, specifically of the base subcomplex of the 19S regulatory complex (RC). In Caenorhabditis elegans, this protein is Probable 26S proteasome non-ATPase regulatory subunit 9 (psmd-9).